Here is a 232-residue protein sequence, read N- to C-terminus: Esterase YpfH (232 aa).

Catalysis depends on charge relay system residues S111, D159, and H191.

This sequence belongs to the AB hydrolase superfamily. AB hydrolase 2 family.

Its function is as follows. Displays esterase activity toward palmitoyl-CoA and pNP-butyrate. The sequence is that of Esterase YpfH (ypfH) from Escherichia coli (strain K12).